A 252-amino-acid chain; its full sequence is ATP synthase subunit a, chloroplastic (252 aa).

The next 5 helical transmembrane spans lie at 41 to 61, 100 to 120, 138 to 158, 204 to 224, and 225 to 245; these read GQVLITSWIVLGGVIIFTLLA, VPFLGTIFIFVFVSNWAGALL, DINTTVSLALLTSVSYFYAGI, LIVGVLVALVPLFVPIPLMLL, and GVFTSAIQALVFATLAGAYIG.

The protein belongs to the ATPase A chain family. As to quaternary structure, F-type ATPases have 2 components, CF(1) - the catalytic core - and CF(0) - the membrane proton channel. CF(1) has five subunits: alpha(3), beta(3), gamma(1), delta(1), epsilon(1). CF(0) has four main subunits: a, b, b' and c.

The protein localises to the plastid. Its subcellular location is the chloroplast thylakoid membrane. In terms of biological role, key component of the proton channel; it plays a direct role in the translocation of protons across the membrane. The protein is ATP synthase subunit a, chloroplastic of Oedogonium cardiacum (Filamentous green alga).